Reading from the N-terminus, the 1042-residue chain is Diacylglycerol lipase-alpha (1042 aa).

Over 1–22 the chain is Cytoplasmic; that stretch reads MPGIVVFRRRWSVGSDDLVLPA. The chain crosses the membrane as a helical span at residues 23 to 43; that stretch reads IFLFLLHTTWFVILSVVLFGL. Residues 44 to 60 lie on the Extracellular side of the membrane; the sequence is VYNPHEACSLNLVDHGR. A helical membrane pass occupies residues 61-81; the sequence is GYLGILLSCMIAEMAIIWLSM. The Cytoplasmic segment spans residues 82–101; it reads RGGILYTEPRDSMQYVLYVR. The helical transmembrane segment at 102–122 threads the bilayer; sequence LAILVIEFIYAIVGIVWLTQY. Residues 123 to 136 lie on the Extracellular side of the membrane; sequence YTSCNDLTAKNVTL. N-linked (GlcNAc...) asparagine glycosylation occurs at asparagine 133. A helical transmembrane segment spans residues 137–157; sequence GMVVCNWVVILSVCITVLCVF. Residues 158-1042 lie on the Cytoplasmic side of the membrane; sequence DPTGRTFVKL…KQDELVISAR (885 aa). Residues serine 472 and aspartate 524 each act as charge relay system in the active site. Phosphoserine occurs at positions 727, 729, 732, 743, 782, 784, 806, 808, 833, 847, and 952. The segment at 846–903 is disordered; that stretch reads LSKHSQDTQPLEAALGSGGVTPERPPSAAANDEEEEVGGGGGGPASRGELALHNGRLG. Residues 1014–1042 form a disordered region; sequence LAADKIRTSTPTGHGASPAKQDELVISAR. Residue threonine 1023 is modified to Phosphothreonine.

Belongs to the AB hydrolase superfamily. Lipase family. As to quaternary structure, interacts (via C-terminal) with CAMK2A; leading to the phosphorylation and inhibition of DAGLA enzymatic activity. Interacts (via PPXXF motif) with HOMER1 and HOMER2; this interaction is required for DAGLA membrane localization. It depends on Ca(2+) as a cofactor. Phosphorylated at Ser-782 and Ser-808 by CAMK2A; phosphorylation by CAMK2A inhibits diacylglycerol lipase activity. Highly expressed in brain and pancreas.

It is found in the cell membrane. It localises to the postsynaptic density membrane. Its subcellular location is the early endosome membrane. The protein resides in the cell projection. The protein localises to the dendritic spine membrane. The catalysed reaction is a 1,2-diacyl-sn-glycerol + H2O = a 2-acylglycerol + a fatty acid + H(+). The enzyme catalyses 1-octadecanoyl-2-(5Z,8Z,11Z,14Z-eicosatetraenoyl)-sn-glycerol + H2O = 2-(5Z,8Z,11Z,14Z-eicosatetraenoyl)-glycerol + octadecanoate + H(+). It catalyses the reaction 1,2-di-(9Z-octadecenoyl)-sn-glycerol + H2O = 2-(9Z-octadecenoyl)-glycerol + (9Z)-octadecenoate + H(+). It carries out the reaction 1-(9Z-octadecenoyl)-2-(5Z,8Z,11Z,14Z-eicosatetraenoyl)-sn-glycerol + H2O = 2-(5Z,8Z,11Z,14Z-eicosatetraenoyl)-glycerol + (9Z)-octadecenoate + H(+). The catalysed reaction is 1-(9Z-octadecenoyl)-2-octadecanoyl-sn-glycerol + H2O = 2-octadecanoylglycerol + (9Z)-octadecenoate + H(+). The enzyme catalyses 1-(9Z-octadecenoyl)-2-(9Z,12Z-octadecadienoyl)-sn-glycerol + H2O = 2-(9Z,12Z-octadecadienoyl)-glycerol + (9Z)-octadecenoate + H(+). It catalyses the reaction 1-(9Z-octadecenoyl)-2-O-(5Z,8Z,11Z,14Z-eicosatetraenyl)-sn-glycerol + H2O = 2-O-(5Z,8Z,11Z,14Z)-eicosatetraenylglycerol + (9Z)-octadecenoate + H(+). Its activity is regulated as follows. Inhibited by 1,2,3-triazole urea covalent inhibitors KT172, DH376 and DO34. Inhibited by p-hydroxy-mercuri-benzoate and HgCl(2), but not to PMSF. Also inhibited by RHC80267. Diacylglycerol lipase activity is inhibited by the phosphorylation of Ser-782 and Ser-808 by CAMK2A. In terms of biological role, serine hydrolase that hydrolyzes arachidonic acid-esterified diacylglycerols (DAGs) to produce the principal endocannabinoid, 2-arachidonoylglycerol (2-AG). Preferentially hydrolyzes sn-1 fatty acids from diacylglycerols (DAG) that contain arachidonic acid (AA) esterified at the sn-2 position to biosynthesize 2-AG. Has negligible activity against other lipids including monoacylglycerols and phospholipids. Plays a key role in regulating 2-AG signaling in the central nervous system (CNS). Regulates 2-AG involved in retrograde suppression at central synapses. Supports axonal growth during development and adult neurogenesis. Plays a role for eCB signaling in the physiological regulation of anxiety and depressive behaviors. Also regulates neuroinflammatory responses in the brain, in particular, LPS-induced microglial activation. The chain is Diacylglycerol lipase-alpha (DAGLA) from Homo sapiens (Human).